The chain runs to 1876 residues: Phenolphthiocerol/phthiocerol polyketide synthase subunit A (1876 aa).

In terms of domain architecture, Carrier 1 spans 9–83; the sequence is ADLRHWLIDY…ALAAYLAAPE (75 aa). At Ser-43 the chain carries O-(pantetheine 4'-phosphoryl)serine. The Ketosynthase family 3 (KS3) domain occupies 101-526; the sequence is DEPIAVVGMG…GTNAHVVIEQ (426 aa). Active-site for beta-ketoacyl synthase activity residues include Cys-273, His-408, and His-448. Residues 624 to 950 are acyltransferase; that stretch reads EGSPGPGTVF…NLNKAHTIHP (327 aa). Residue Ser-720 is the For malonyltransferase activity of the active site. Residues 997–1112 are N-terminal hotdog fold; the sequence is HTTVATVSAS…AQLSSSPSDS (116 aa). The PKS/mFAS DH domain occupies 997-1267; sequence HTTVATVSAS…YRALDFGLDV (271 aa). The Proton acceptor; for dehydratase activity role is filled by His-1027. The tract at residues 1104–1130 is disordered; sequence QLSSSPSDSASSLNEHHRANGQPPERA. Residues 1106–1115 are compositionally biased toward low complexity; sequence SSSPSDSASS. The segment at 1130-1267 is C-terminal hotdog fold; sequence AHRDLIPDLA…YRALDFGLDV (138 aa). Asp-1186 serves as the catalytic Proton donor; for dehydratase activity. A beta-ketoacyl reductase region spans residues 1491–1728; sequence AAYLITGGLG…DGYDVAQAVV (238 aa). 1492–1551 provides a ligand contact to NADP(+); sequence AYLITGGLGALGLLMADWLADRGAHRLVLTGRTPLPPRRDWQLDTLDTELRRRIDAIRAL. The Carrier 2 domain occupies 1759 to 1836; sequence EVRSELEQGL…SLASYLAKRV (78 aa). Ser-1796 is modified (O-(pantetheine 4'-phosphoryl)serine).

It depends on NADP(+) as a cofactor. Pantetheine 4'-phosphate is required as a cofactor.

The enzyme catalyses icosanoyl-[(phenol)carboxyphthiodiolenone synthase] + 2 (S)-methylmalonyl-CoA + 3 malonyl-CoA + 5 NADPH + 10 H(+) = C32-carboxyphthiodiolenone-[(phenol)carboxyphthiodiolenone synthase] + 5 CO2 + 5 NADP(+) + 5 CoA + 2 H2O. It catalyses the reaction docosanoyl-[(phenol)carboxyphthiodiolenone synthase] + 2 (S)-methylmalonyl-CoA + 3 malonyl-CoA + 5 NADPH + 10 H(+) = C34-carboxyphthiodiolenone-[(phenol)carboxyphthiodiolenone synthase] + 5 CO2 + 5 NADP(+) + 5 CoA + 2 H2O. It carries out the reaction 17-(4-hydroxyphenyl)heptadecanoyl-[(phenol)carboxyphthiodiolenone synthase] + 2 (S)-methylmalonyl-CoA + 3 malonyl-CoA + 5 NADPH + 10 H(+) = C35-(phenol)carboxyphthiodiolenone-[(phenol)carboxyphthiodiolenone synthase] + 5 CO2 + 5 NADP(+) + 5 CoA + 2 H2O. The catalysed reaction is 19-(4-hydroxyphenyl)nonadecanoyl-[(phenol)carboxyphthiodiolenone synthase] + 2 (S)-methylmalonyl-CoA + 3 malonyl-CoA + 5 NADPH + 10 H(+) = C37-(phenol)carboxyphthiodiolenone-[(phenol)carboxyphthiodiolenone synthase] + 5 CO2 + 5 NADP(+) + 5 CoA + 2 H2O. The protein operates within lipid metabolism; fatty acid biosynthesis. Functionally, part of the PpsABCDE complex involved in the biosynthesis of the lipid core common to phthiocerols and phenolphthiocerols by successive additions of malonyl-CoA or methylmalonyl-CoA extender units. PpsA can accept as substrate the activated forms of either icosanoyl (C20), docosanoyl (C22) or lignoceroyl (C24) groups from FadD26, or a (4-hydroxyphenyl)-C17 or (4-hydroxyphenyl)-C19 fatty acyl from FadD29. PpsA initiates the biosynthesis and extends its substrate using a malonyl-CoA extender unit. The PpsB and PpsC proteins add the second and third malonyl-CoA extender units. PpsD adds an (R)-methylmalonyl unit and PpsE adds a second (R)-methylmalonyl unit. The incorporation of the methylmalonyl units results in formation of two branched methyl groups in the elongated product. The polypeptide is Phenolphthiocerol/phthiocerol polyketide synthase subunit A (ppsA) (Mycobacterium bovis (strain ATCC BAA-935 / AF2122/97)).